The sequence spans 624 residues: Protein POLLEN DEFECTIVE IN GUIDANCE 1 (624 aa).

The segment at 20 to 63 (SFENDDTSIRRSSSDPITGNVASESPRDYGKRKRSKKKKKKVNQ) is disordered. Polar residues predominate over residues 33 to 42 (SDPITGNVAS). The segment covering 49–61 (GKRKRSKKKKKKV) has biased composition (basic residues). 6 helical membrane passes run 263–283 (VLID…LTVM), 305–325 (ASEL…ILLG), 391–411 (FVSD…ILLA), 413–433 (AITL…LLVS), 545–565 (LTFV…PVYA), and 578–598 (LWMV…KVLI).

Belongs to the TAPT1 family. In terms of assembly, interacts with CRT3, but not with CRT1 or CNX. As to expression, expressed in inflorescences, siliques, roots and shoots. Expressed in early embryo, endosperm, mature pollen and pollen tubes, synergide cells and weakly in antipodal cells.

It is found in the membrane. Its subcellular location is the endoplasmic reticulum lumen. In terms of biological role, probable component of the calreticulin 3 (CRT3) complex, acting probably as a co-chaperone involved in protein retention in the endoplasmic reticulum lumen. Required for micropylar pollen tube guidance. Plays an essential role in cell plate orientation or positioning in early embryo patterning. The chain is Protein POLLEN DEFECTIVE IN GUIDANCE 1 (POD1) from Arabidopsis thaliana (Mouse-ear cress).